The following is a 633-amino-acid chain: tRNA uridine 5-carboxymethylaminomethyl modification enzyme MnmG (633 aa).

FAD is bound by residues 15-20 (GAGHAG), Ile-127, and Ser-182. 276-290 (GPRYCPSIEDKIVRF) serves as a coordination point for NAD(+). An FAD-binding site is contributed by Gln-373.

Belongs to the MnmG family. As to quaternary structure, homodimer. Heterotetramer of two MnmE and two MnmG subunits. Requires FAD as cofactor.

Its subcellular location is the cytoplasm. Functionally, NAD-binding protein involved in the addition of a carboxymethylaminomethyl (cmnm) group at the wobble position (U34) of certain tRNAs, forming tRNA-cmnm(5)s(2)U34. The sequence is that of tRNA uridine 5-carboxymethylaminomethyl modification enzyme MnmG from Streptococcus agalactiae serotype Ia (strain ATCC 27591 / A909 / CDC SS700).